A 540-amino-acid chain; its full sequence is Alanine aminotransferase 2, mitochondrial (540 aa).

The transit peptide at 1-46 (MRRFLINQAKGLVDHSRRQHHHKSPSFLSPQPRPLASSPPALSRFF) directs the protein to the mitochondrion. A disordered region spans residues 11 to 40 (GLVDHSRRQHHHKSPSFLSPQPRPLASSPP). The span at 28-40 (LSPQPRPLASSPP) shows a compositional bias: low complexity. The residue at position 357 (K357) is an N6-(pyridoxal phosphate)lysine.

Belongs to the class-I pyridoxal-phosphate-dependent aminotransferase family. Alanine aminotransferase subfamily. In terms of assembly, homodimer. Pyridoxal 5'-phosphate serves as cofactor. The N-terminus is blocked. In terms of tissue distribution, expressed in shoots, essentially in leaves and flowers, mostly in vascular tissues. Also detected in stems and roots.

Its subcellular location is the mitochondrion. It catalyses the reaction L-alanine + 2-oxoglutarate = pyruvate + L-glutamate. It functions in the pathway photosynthesis; C4 acid pathway. Its pathway is amino-acid degradation; L-alanine degradation via transaminase pathway; pyruvate from L-alanine: step 1/1. The chain is Alanine aminotransferase 2, mitochondrial (ALAAT2) from Arabidopsis thaliana (Mouse-ear cress).